The sequence spans 345 residues: Holliday junction branch migration complex subunit RuvB (345 aa).

A disordered region spans residues 1 to 22 (MIETDALSGGTPRRLVTQQPLS). Residues 4 to 193 (TDALSGGTPR…FGIVARLEFY (190 aa)) are large ATPase domain (RuvB-L). ATP contacts are provided by residues Leu-32, Arg-33, Gly-74, Lys-77, Thr-78, Thr-79, 140 to 142 (EDY), Arg-183, Tyr-193, and Arg-230. A Mg(2+)-binding site is contributed by Thr-78. The tract at residues 194–264 (TPEELTRIVR…VADAALSMLD (71 aa)) is small ATPAse domain (RuvB-S). The segment at 267–345 (PAGLDVMDRK…HFGFVPPERV (79 aa)) is head domain (RuvB-H). DNA-binding residues include Arg-322 and Arg-327.

Belongs to the RuvB family. In terms of assembly, homohexamer. Forms an RuvA(8)-RuvB(12)-Holliday junction (HJ) complex. HJ DNA is sandwiched between 2 RuvA tetramers; dsDNA enters through RuvA and exits via RuvB. An RuvB hexamer assembles on each DNA strand where it exits the tetramer. Each RuvB hexamer is contacted by two RuvA subunits (via domain III) on 2 adjacent RuvB subunits; this complex drives branch migration. In the full resolvosome a probable DNA-RuvA(4)-RuvB(12)-RuvC(2) complex forms which resolves the HJ.

It localises to the cytoplasm. It catalyses the reaction ATP + H2O = ADP + phosphate + H(+). In terms of biological role, the RuvA-RuvB-RuvC complex processes Holliday junction (HJ) DNA during genetic recombination and DNA repair, while the RuvA-RuvB complex plays an important role in the rescue of blocked DNA replication forks via replication fork reversal (RFR). RuvA specifically binds to HJ cruciform DNA, conferring on it an open structure. The RuvB hexamer acts as an ATP-dependent pump, pulling dsDNA into and through the RuvAB complex. RuvB forms 2 homohexamers on either side of HJ DNA bound by 1 or 2 RuvA tetramers; 4 subunits per hexamer contact DNA at a time. Coordinated motions by a converter formed by DNA-disengaged RuvB subunits stimulates ATP hydrolysis and nucleotide exchange. Immobilization of the converter enables RuvB to convert the ATP-contained energy into a lever motion, pulling 2 nucleotides of DNA out of the RuvA tetramer per ATP hydrolyzed, thus driving DNA branch migration. The RuvB motors rotate together with the DNA substrate, which together with the progressing nucleotide cycle form the mechanistic basis for DNA recombination by continuous HJ branch migration. Branch migration allows RuvC to scan DNA until it finds its consensus sequence, where it cleaves and resolves cruciform DNA. The polypeptide is Holliday junction branch migration complex subunit RuvB (Laribacter hongkongensis (strain HLHK9)).